Here is a 462-residue protein sequence, read N- to C-terminus: MNRKCICDLCSCGKHHCPHLPTKIYEKTEKPCFFSEYTEKYPTYLSYVPRESFKPKLEYQKVNIPMEGLSTTKRDFGTFNIVPVKHHLPEKATPIQDEMDFLTTYNQHYNYCPANRVNPIKPRDNKHQCNDKMECVPTYKADYLPWNQQKRSSIRPPQSYRPASCRFDHRTTHQDDYPIKNPVDTVSYKPPHGPKLCNIPLESMTSYKSSYVAHPMEKRCVYEGEKYKPSEVPFDSLTTHKDSYRGLIGEPAKTWKPAPNHPGLDIPFPSNTEFREKFQPWPTPKIVPKESIAYIPPEGKMDLLTTVQADYKCPNGVPAQSCRPVIHLKKSDRFESSTTNREDFKHWANIRREPVKPNHQLKFSDEPMEYMTTNRAHYVPHAPANTKSCKPTWSGPRVNIPLEGQTTYSTSFTPKEIQRCPASYPEPPGYIFDEVDAVGHRLYRPASGATSQESNHLGFGDA.

Mn regions lie at residues Lys30–Ile64, Pro65–Asp97, Glu98–Asp131, Lys132–Cys165, Arg166–Ile199, Pro200–Val232, Pro233–Ile266, Pro267–Gly299, Lys300–Asp332, Arg333–Glu366, Pro367–Ile400, and Pro401–Glu434.

This sequence belongs to the FAM154 family. In terms of assembly, associates with microtubules via the Mn regions.

Its subcellular location is the cytoplasm. It is found in the cytoskeleton. The protein localises to the microtubule organizing center. The protein resides in the centrosome. It localises to the centriole. Its subcellular location is the cilium basal body. It is found in the cilium axoneme. Functionally, may play a role in the regulation of cilium length. Stabilizes microtubules at low temperature. The sequence is that of Stabilizer of axonemal microtubules 1 (Saxo1) from Rattus norvegicus (Rat).